Consider the following 617-residue polypeptide: UvrABC system protein C (617 aa).

The GIY-YIG domain maps to 12-91; sequence EKPGVYLMKD…IKKYKPKYNV (80 aa). The UVR domain occupies 203–238; it reads EWLVEKLKEEMQKAADELRFEEAARLRDQIFAIEKI.

Belongs to the UvrC family. In terms of assembly, interacts with UvrB in an incision complex.

Its subcellular location is the cytoplasm. The UvrABC repair system catalyzes the recognition and processing of DNA lesions. UvrC both incises the 5' and 3' sides of the lesion. The N-terminal half is responsible for the 3' incision and the C-terminal half is responsible for the 5' incision. The chain is UvrABC system protein C from Caldanaerobacter subterraneus subsp. tengcongensis (strain DSM 15242 / JCM 11007 / NBRC 100824 / MB4) (Thermoanaerobacter tengcongensis).